The following is a 238-amino-acid chain: MSQSLIVALDFPGKQDVEQFLRHFEGEELFVKVGMELFYKEGPAIITYLKEKGHKIFLDLKLHDIPNTVKSAMRSLASLDVDMVNVHAAGGSSMMKAAIEGLEEGKQEGKERPICIAVTQLTSTSEAMMKKEIGIEKTLEEAVAHYAKLTKESGLDGVVCSTLEVPKLREVCGSEFVTVTPGIRLASDDVNDQVRVATPKRARELGSSYIVVGRSITKAENPLEAYKTVKQQWEGVTV.

Residues Asp10, Lys32, 59-68 (DLKLHDIPNT), Thr122, Arg184, Gln193, Gly213, and Arg214 contribute to the substrate site. Lys61 (proton donor) is an active-site residue.

This sequence belongs to the OMP decarboxylase family. Type 1 subfamily. Homodimer.

It carries out the reaction orotidine 5'-phosphate + H(+) = UMP + CO2. Its pathway is pyrimidine metabolism; UMP biosynthesis via de novo pathway; UMP from orotate: step 2/2. Functionally, catalyzes the decarboxylation of orotidine 5'-monophosphate (OMP) to uridine 5'-monophosphate (UMP). The chain is Orotidine 5'-phosphate decarboxylase from Bacillus cereus (strain ZK / E33L).